The sequence spans 875 residues: Alanine--tRNA ligase (875 aa).

4 residues coordinate Zn(2+): His564, His568, Cys666, and His670.

The protein belongs to the class-II aminoacyl-tRNA synthetase family. As to quaternary structure, homotetramer. It depends on Zn(2+) as a cofactor.

The protein resides in the cytoplasm. It carries out the reaction tRNA(Ala) + L-alanine + ATP = L-alanyl-tRNA(Ala) + AMP + diphosphate. Its function is as follows. Catalyzes the attachment of alanine to tRNA(Ala) in a two-step reaction: alanine is first activated by ATP to form Ala-AMP and then transferred to the acceptor end of tRNA(Ala). Also edits incorrectly charged Ser-tRNA(Ala) and Gly-tRNA(Ala) via its editing domain. The protein is Alanine--tRNA ligase of Enterobacter sp. (strain 638).